We begin with the raw amino-acid sequence, 119 residues long: Basic phospholipase A2 notexin (119 aa).

Disulfide bonds link Cys11–Cys71, Cys27–Cys118, Cys29–Cys45, Cys44–Cys99, Cys51–Cys92, Cys60–Cys85, and Cys78–Cys90. Tyr28, Gly30, and Gly32 together coordinate Ca(2+). His48 is a catalytic residue. Asp49 is a binding site for Ca(2+). Residue Asp93 is part of the active site.

This sequence belongs to the phospholipase A2 family. Group I subfamily. D49 sub-subfamily. As to quaternary structure, monomer. Requires Ca(2+) as cofactor. In terms of tissue distribution, expressed by the venom gland.

It is found in the secreted. It carries out the reaction a 1,2-diacyl-sn-glycero-3-phosphocholine + H2O = a 1-acyl-sn-glycero-3-phosphocholine + a fatty acid + H(+). In terms of biological role, snake venom phospholipase A2 (PLA2) that inhibits neuromuscular transmission by blocking acetylcholine release from the nerve termini. Is directly toxic to skeletal muscle upon local application in vivo (dystrophic effect). Also has direct nephrotoxicity in experimental mice; a single subcutaneous dose (1.38 ug/kg) produces renal tubular and glomerular damage within 24 hours. PLA2 catalyzes the calcium-dependent hydrolysis of the 2-acyl groups in 3-sn-phosphoglycerides. This Notechis scutatus scutatus (Mainland tiger snake) protein is Basic phospholipase A2 notexin.